The sequence spans 291 residues: ATP synthase subunit a (291 aa).

Transmembrane regions (helical) follow at residues 48–68, 108–128, 161–181, 241–261, and 262–282; these read IHLDSMGWSIGLGIIFCLVFW, IAPLALTIFVWIFLMNLMDLI, DPNITLGMSLSVFVLILFYSI, LIFILIALLPFWIQWALSVPW, and AIFHILVITLQAFIFMMLTIV.

Belongs to the ATPase A chain family. In terms of assembly, F-type ATPases have 2 components, CF(1) - the catalytic core - and CF(0) - the membrane proton channel. CF(1) has five subunits: alpha(3), beta(3), gamma(1), delta(1), epsilon(1). CF(0) has three main subunits: a(1), b(2) and c(9-12). The alpha and beta chains form an alternating ring which encloses part of the gamma chain. CF(1) is attached to CF(0) by a central stalk formed by the gamma and epsilon chains, while a peripheral stalk is formed by the delta and b chains.

The protein resides in the cell inner membrane. Functionally, key component of the proton channel; it plays a direct role in the translocation of protons across the membrane. This Acinetobacter baylyi (strain ATCC 33305 / BD413 / ADP1) protein is ATP synthase subunit a.